The chain runs to 196 residues: Crossover junction endodeoxyribonuclease RuvC (196 aa).

Residues aspartate 23, glutamate 83, and histidine 156 contribute to the active site. Aspartate 23, glutamate 83, and histidine 156 together coordinate Mg(2+).

This sequence belongs to the RuvC family. In terms of assembly, homodimer which binds Holliday junction (HJ) DNA. The HJ becomes 2-fold symmetrical on binding to RuvC with unstacked arms; it has a different conformation from HJ DNA in complex with RuvA. In the full resolvosome a probable DNA-RuvA(4)-RuvB(12)-RuvC(2) complex forms which resolves the HJ. Mg(2+) serves as cofactor.

Its subcellular location is the cytoplasm. It catalyses the reaction Endonucleolytic cleavage at a junction such as a reciprocal single-stranded crossover between two homologous DNA duplexes (Holliday junction).. Functionally, the RuvA-RuvB-RuvC complex processes Holliday junction (HJ) DNA during genetic recombination and DNA repair. Endonuclease that resolves HJ intermediates. Cleaves cruciform DNA by making single-stranded nicks across the HJ at symmetrical positions within the homologous arms, yielding a 5'-phosphate and a 3'-hydroxyl group; requires a central core of homology in the junction. The consensus cleavage sequence is 5'-(A/T)TT(C/G)-3'. Cleavage occurs on the 3'-side of the TT dinucleotide at the point of strand exchange. HJ branch migration catalyzed by RuvA-RuvB allows RuvC to scan DNA until it finds its consensus sequence, where it cleaves and resolves the cruciform DNA. The protein is Crossover junction endodeoxyribonuclease RuvC of Treponema pallidum (strain Nichols).